The sequence spans 126 residues: UPF0231 protein VC0395_A0134/VC395_0622 (126 aa).

It belongs to the UPF0231 family.

In Vibrio cholerae serotype O1 (strain ATCC 39541 / Classical Ogawa 395 / O395), this protein is UPF0231 protein VC0395_A0134/VC395_0622.